The sequence spans 96 residues: (4S)-4-hydroxy-5-phosphonooxypentane-2,3-dione isomerase (96 aa).

One can recognise an ABM domain in the interval 2–91 (HVTLVEINVH…MTGPRKKRLF (90 aa)).

This sequence belongs to the LsrG family. In terms of assembly, homodimer.

Its subcellular location is the cytoplasm. It carries out the reaction (2S)-2-hydroxy-3,4-dioxopentyl phosphate = 3-hydroxy-2,4-dioxopentyl phosphate. In terms of biological role, involved in the degradation of phospho-AI-2, thereby terminating induction of the lsr operon and closing the AI-2 signaling cycle. Catalyzes the conversion of (4S)-4-hydroxy-5-phosphonooxypentane-2,3-dione (P-DPD) to 3-hydroxy-5-phosphonooxypentane-2,4-dione (P-HPD). This is (4S)-4-hydroxy-5-phosphonooxypentane-2,3-dione isomerase from Shigella flexneri serotype 5b (strain 8401).